Consider the following 853-residue polypeptide: Dynamin-A (853 aa).

Residues 22-296 (PLDLPQIVVV…LMFHIRDTLP (275 aa)) form the Dynamin-type G domain. Residues 32–39 (GSQSSGKS) are G1 motif. 32–40 (GSQSSGKSS) contacts GTP. The G2 motif stretch occupies residues 58-60 (VTR). The segment at 138–141 (DLPG) is G3 motif. Residues 207–210 (TKLD) form a G4 motif region. GTP-binding positions include 207–213 (TKLDLMD) and 238–241 (NRSQ). The G5 motif stretch occupies residues 237 to 240 (INRS). Low complexity-rich tracts occupy residues 523–569 (DQYQ…QQNQ) and 590–607 (PAQQ…KGPQ). The disordered stretch occupies residues 523–738 (DQYQQQQQQQ…RYQDDFYGRG (216 aa)). Residues 610 to 624 (PPNQSKPSSIPQNGP) show a composition bias toward polar residues. Composition is skewed to low complexity over residues 625 to 635 (NNNNNNNNNNN) and 664 to 728 (NNSN…SSYN). The region spanning 762–853 (TELIRELLIS…IINEIRDFRN (92 aa)) is the GED domain.

The protein belongs to the TRAFAC class dynamin-like GTPase superfamily. Dynamin/Fzo/YdjA family.

It is found in the cytoplasm. Its function is as follows. Function in membrane trafficking processes along the endo-lysosomal pathway. This chain is Dynamin-A (dymA), found in Dictyostelium discoideum (Social amoeba).